The following is a 354-amino-acid chain: Malate dehydrogenase 2, peroxisomal (354 aa).

The segment at 10 to 18 (RIARISAHL) is peroxisomal targeting signal PTS2. NAD(+) is bound by residues 49–55 (GAAGGIG) and Asp-75. Arg-122 and Arg-128 together coordinate substrate. Residues Asn-135 and 158–160 (ISN) contribute to the NAD(+) site. Asn-160 and Arg-194 together coordinate substrate. The active-site Proton acceptor is the His-218. Met-269 provides a ligand contact to NAD(+).

Belongs to the LDH/MDH superfamily. MDH type 1 family. In terms of assembly, homodimer. As to expression, expressed in rosette leaves.

It localises to the peroxisome. It catalyses the reaction (S)-malate + NAD(+) = oxaloacetate + NADH + H(+). Catalyzes a reversible NAD-dependent dehydrogenase reaction involved in central metabolism and redox homeostasis between organelle compartments. Peroxisomal NAD-dependent malate dehydrogenase involved in fatty acid beta-oxidation. Reoxidizes NADH from the beta-oxidation and provides NAD for the conversion of fatty acyl-CoA to acetyl-CoA. Does not participate directly in the glyoxylate cycle. Required for maintenance of photosynthetic rates under photorespiratory conditions, and carbon flow during photorespiration. Supplies NADH reductant to the peroxisomal hydroxypyruvate reductase (HPR), which reduces hydroxypyruvate into glycerate in the photorespiratory cycle. The sequence is that of Malate dehydrogenase 2, peroxisomal from Arabidopsis thaliana (Mouse-ear cress).